The following is a 306-amino-acid chain: Acetaldehyde dehydrogenase 2/3 (306 aa).

Cysteine 130 acts as the Acyl-thioester intermediate in catalysis. NAD(+)-binding positions include serine 161–asparagine 169 and asparagine 272.

It belongs to the acetaldehyde dehydrogenase family.

It catalyses the reaction acetaldehyde + NAD(+) + CoA = acetyl-CoA + NADH + H(+). The polypeptide is Acetaldehyde dehydrogenase 2/3 (mhpF) (Azoarcus sp. (strain BH72)).